We begin with the raw amino-acid sequence, 129 residues long: Thylakoid-associated single-stranded DNA-binding protein slr1034 (129 aa).

The 100-residue stretch at 1 to 100 (MNSFVLMATV…LTASRISLVD (100 aa)) folds into the SSB domain. The tract at residues 99-129 (VDSGNGINPGELSSPPEPEAVDLSNTDDIPF) is disordered.

In terms of assembly, homotetramer.

The protein localises to the cellular thylakoid membrane. This chain is Thylakoid-associated single-stranded DNA-binding protein slr1034, found in Synechocystis sp. (strain ATCC 27184 / PCC 6803 / Kazusa).